Consider the following 264-residue polypeptide: COP9 signalosome complex subunit 7b (264 aa).

Ala-2 carries the N-acetylalanine modification. Positions 2 to 159 (AGEQKPSSNL…QLLEVDFCIG (158 aa)) constitute a PCI domain. Positions 194–237 (RANQYKENHSRTQQQVEAEVTNIKKTLKATASSSAQEMEQQLAE) form a coiled coil. The span at 223–232 (TASSSAQEME) shows a compositional bias: polar residues. The segment at 223-264 (TASSSAQEMEQQLAERECPPHAEQRQPTKKMSKVKGLVSSRH) is disordered. Residues 235–248 (LAERECPPHAEQRQ) show a composition bias toward basic and acidic residues.

This sequence belongs to the CSN7/EIF3M family. CSN7 subfamily. Component of the CSN complex, composed of COPS1/GPS1, COPS2, COPS3, COPS4, COPS5, COPS6, COPS7 (COPS7A or COPS7B), COPS8 and COPS9. In the complex, it probably interacts directly with COPS1, COPS2, COPS4, COPS5, COPS6 and COPS8. Interacts with EIF3S6.

It localises to the cytoplasm. It is found in the nucleus. Component of the COP9 signalosome complex (CSN), a complex involved in various cellular and developmental processes. The CSN complex is an essential regulator of the ubiquitin (Ubl) conjugation pathway by mediating the deneddylation of the cullin subunits of SCF-type E3 ligase complexes, leading to decrease the Ubl ligase activity of SCF-type complexes such as SCF, CSA or DDB2. The complex is also involved in phosphorylation of p53/TP53, JUN, I-kappa-B-alpha/NFKBIA, ITPK1 and IRF8/ICSBP, possibly via its association with CK2 and PKD kinases. CSN-dependent phosphorylation of TP53 and JUN promotes and protects degradation by the Ubl system, respectively. In Bos taurus (Bovine), this protein is COP9 signalosome complex subunit 7b (COPS7B).